Consider the following 131-residue polypeptide: Small ribosomal subunit protein uS8 (131 aa).

The protein belongs to the universal ribosomal protein uS8 family. As to quaternary structure, part of the 30S ribosomal subunit. Contacts proteins S5 and S12.

Its function is as follows. One of the primary rRNA binding proteins, it binds directly to 16S rRNA central domain where it helps coordinate assembly of the platform of the 30S subunit. The chain is Small ribosomal subunit protein uS8 from Thermodesulfovibrio yellowstonii (strain ATCC 51303 / DSM 11347 / YP87).